Reading from the N-terminus, the 399-residue chain is Acetylornithine aminotransferase (399 aa).

Residues Gly-102–Ala-103 and Phe-138 each bind pyridoxal 5'-phosphate. Residue Arg-141 coordinates N(2)-acetyl-L-ornithine. A pyridoxal 5'-phosphate-binding site is contributed by Asp-223–Gln-226. Lys-252 is subject to N6-(pyridoxal phosphate)lysine. Position 280 (Thr-280) interacts with pyridoxal 5'-phosphate.

This sequence belongs to the class-III pyridoxal-phosphate-dependent aminotransferase family. ArgD subfamily. In terms of assembly, homodimer. The cofactor is pyridoxal 5'-phosphate.

It is found in the cytoplasm. The catalysed reaction is N(2)-acetyl-L-ornithine + 2-oxoglutarate = N-acetyl-L-glutamate 5-semialdehyde + L-glutamate. The protein operates within amino-acid biosynthesis; L-arginine biosynthesis; N(2)-acetyl-L-ornithine from L-glutamate: step 4/4. This chain is Acetylornithine aminotransferase, found in Ralstonia nicotianae (strain ATCC BAA-1114 / GMI1000) (Ralstonia solanacearum).